An 888-amino-acid polypeptide reads, in one-letter code: Mitogen-activated protein kinase kinase kinase 12 (888 aa).

The span at 26-42 (MRKLDPDTSDCTPEKDL) shows a compositional bias: basic and acidic residues. The interval 26-104 (MRKLDPDTSD…TGSPESRASR (79 aa)) is disordered. Phosphothreonine occurs at positions 37 and 43. The span at 64 to 75 (SPSPGGEPPPEP) shows a compositional bias: pro residues. Residues 158–399 (ILDLQWVGSG…FRQILLHLDI (242 aa)) enclose the Protein kinase domain. Residues 164-172 (VGSGAQGAV) and Lys-185 contribute to the ATP site. The active-site Proton acceptor is Asp-269. Leucine-zipper regions lie at residues 423–444 (VKLH…EEEL) and 476–497 (LNAL…EQAL). Residues 557 to 620 (GVGLPGCPKA…GGLGVGPTAW (64 aa)) form a disordered region. Over residues 572–584 (RSRRGKTRHRKAS) the composition is skewed to basic residues. Gly residues predominate over residues 605–615 (GGLGSPGGLGV). A Phosphoserine modification is found at Ser-640. Disordered stretches follow at residues 654–731 (RGRG…YQHL) and 743–888 (TRSQ…SLPP). Positions 704-725 (PGEGVGLLGTGREGTTGRGGSR) are enriched in gly residues. Positions 752–763 (SEEEEGEVDSEV) are enriched in acidic residues. 2 stretches are compositionally biased toward polar residues: residues 776–789 (NMRQ…SENP) and 798–812 (SEPS…GSTN). The segment covering 813-823 (TDERPDERSDD) has biased composition (basic and acidic residues).

This sequence belongs to the protein kinase superfamily. STE Ser/Thr protein kinase family. MAP kinase kinase kinase subfamily. As to quaternary structure, homodimer. Interacts with MBIP. Requires Mg(2+) as cofactor. In terms of processing, autophosphorylated on Ser/Thr. Phosphorylated in cytosol under basal conditions and dephosphorylated when membrane-associated. The activity of MAP3K12 can be regulated through its proteasomal degradation. APOE, through a receptor-mediated mechanism, activates MAP3K12 by preventing its proteasomal degradation.

It is found in the cytoplasm. It localises to the cell membrane. The enzyme catalyses L-seryl-[protein] + ATP = O-phospho-L-seryl-[protein] + ADP + H(+). The catalysed reaction is L-threonyl-[protein] + ATP = O-phospho-L-threonyl-[protein] + ADP + H(+). In terms of biological role, part of a non-canonical MAPK signaling pathway. Activated by APOE, enhances the AP-1-mediated transcription of APP, via a MAP kinase signal transduction pathway composed of MAP2K7 and MAPK1/ERK2 and MAPK3/ERK1. May be an activator of the JNK/SAPK pathway. This is Mitogen-activated protein kinase kinase kinase 12 (Map3k12) from Rattus norvegicus (Rat).